Here is a 902-residue protein sequence, read N- to C-terminus: Androgen receptor (902 aa).

A modulating region spans residues Met-1–Lys-540. An interaction with ZNF318 region spans residues Met-1–Ala-569. Disordered stretches follow at residues Gln-35 to Leu-146 and Gln-194 to Gly-224. Ser-61 is subject to Phosphoserine; by CDK9. Ser-75 carries the post-translational modification Phosphoserine. Over residues Gln-94–Glu-103 the composition is skewed to low complexity. 2 stretches are compositionally biased toward polar residues: residues Glu-196–Val-205 and Ala-213–Gly-224. Tyr-221 is subject to Phosphotyrosine; by CSK. Residue Ser-254 is modified to Phosphoserine. Tyr-265 carries the post-translational modification Phosphotyrosine; by CSK and TNK2. A Phosphoserine modification is found at Ser-290. Phosphotyrosine; by CSK occurs at positions 305, 344, 355, and 360. Position 361 is a phosphotyrosine; by CSK and TNK2 (Tyr-361). A Glycyl lysine isopeptide (Lys-Gly) (interchain with G-Cter in SUMO) cross-link involves residue Lys-384. Tyr-391 is modified (phosphotyrosine; by CSK). The segment at Glu-439 to Tyr-465 is disordered. A Glycyl lysine isopeptide (Lys-Gly) (interchain with G-Cter in SUMO) cross-link involves residue Lys-503. 2 positions are modified to phosphotyrosine; by CSK: Tyr-517 and Tyr-534. Positions Tyr-534–Thr-901 are interaction with LPXN. The segment at residues Thr-541–Leu-614 is a DNA-binding region (nuclear receptor). 2 NR C4-type zinc fingers span residues Cys-542–Cys-562 and Cys-578–Cys-602. The interval Tyr-554–Val-644 is interaction with HIPK3. The interaction with CCAR1 stretch occupies residues Gln-574–Thr-901. Positions Met-607 to Thr-901 are interaction with KAT7. Residue Ser-633 is modified to Phosphoserine. The NR LBD domain occupies Glu-651–Ile-882. The 17beta-hydroxy-5alpha-androstan-3-one site is built by Asn-688 and Arg-735. Residues Lys-828 and Lys-830 each participate in a glycyl lysine isopeptide (Lys-Gly) (interchain with G-Cter in ubiquitin) cross-link. Thr-860 is a binding site for 17beta-hydroxy-5alpha-androstan-3-one. The residue at position 898 (Tyr-898) is a Phosphotyrosine; by CSK.

Belongs to the nuclear hormone receptor family. NR3 subfamily. Binds DNA as a homodimer. Part of a ternary complex containing AR, EFCAB6/DJBP and PARK7. Interacts with HIPK3 and NR0B2 in the presence of androgen. The ligand binding domain interacts with KAT7/HBO1 in the presence of dihydrotestosterone. Interacts with EFCAB6/DJBP, PQBP1, RANBP9, RBAK, SPDEF, SRA1, TGFB1I1, ZNF318 and RREB1. Interacts with ZMIZ1/ZIMP10 and ZMIZ2/ZMIP7 which both enhance its transactivation activity. Interacts with SLC30A9 and RAD54L2/ARIP4. Interacts with MACROD1 (via macro domain). Interacts via the ligand-binding domain with LXXLL and FXXLF motifs from NCOA1, NCOA2, NCOA3 and MAGEA11. Interacts (via nuclear receptor DNA binding domain and nuclear receptor ligand binding domain) with NCOA4. The AR N-terminal poly-Gln region binds Ran resulting in enhancement of AR-mediated transactivation. Ran-binding decreases as the poly-Gln length increases. Interacts with HIP1 (via coiled coil domain). Interacts (via ligand-binding domain) with TRIM68. Interacts with TNK2. Interacts with USP26. Interacts with RNF6. Interacts (regulated by RNF6 probably through polyubiquitination) with RNF14; regulates AR transcriptional activity. Interacts with PRMT2 and TRIM24. Interacts with RACK1. Interacts with RANBP10; this interaction enhances dihydrotestosterone-induced AR transcriptional activity. Interacts with PRPF6 in a hormone-independent way; this interaction enhances dihydrotestosterone-induced AR transcriptional activity. Interacts with STK4/MST1. Interacts with ZIPK/DAPK3. Interacts with LPXN. Interacts with MAK. Part of a complex containing AR, MAK and NCOA3. Interacts with CRY1. Interacts with CCAR1 and GATA2. Interacts with BUD31. Interacts with ARID4A. Interacts with ARID4B. Interacts (via NR LBD domain) with ZBTB7A; the interaction is direct and androgen-dependent. Interacts with NCOR1. Interacts with NCOR2. Interacts with CRY2 in a ligand-dependent manner. Phosphorylated in prostate cancer cells in response to several growth factors including EGF. Phosphorylation is induced by c-Src kinase (CSK). Tyr-517 is one of the major phosphorylation sites and an increase in phosphorylation and Src kinase activity is associated with prostate cancer progression. Phosphorylation by TNK2 enhances the DNA-binding and transcriptional activity. Phosphorylation at Ser-61 by CDK9 regulates AR promoter selectivity and cell growth. Phosphorylation by PAK6 leads to AR-mediated transcription inhibition. In terms of processing, sumoylated on Lys-384 (major) and Lys-503. Ubiquitinated. Deubiquitinated by USP26. 'Lys-6' and 'Lys-27'-linked polyubiquitination by RNF6 modulates AR transcriptional activity and specificity. Post-translationally, palmitoylated by ZDHHC7 and ZDHHC21. Palmitoylation is required for plasma membrane targeting and for rapid intracellular signaling via ERK and AKT kinases and cAMP generation. In terms of tissue distribution, highest levels in the seminal vesicle, ventral prostate and coagulating gland with lower levels in the kidney and levator ani muscle.

Its subcellular location is the nucleus. The protein localises to the cytoplasm. Its function is as follows. Steroid hormone receptors are ligand-activated transcription factors that regulate eukaryotic gene expression and affect cellular proliferation and differentiation in target tissues. Transcription factor activity is modulated by bound coactivator and corepressor proteins like ZBTB7A that recruits NCOR1 and NCOR2 to the androgen response elements/ARE on target genes, negatively regulating androgen receptor signaling and androgen-induced cell proliferation. Transcription activation is also down-regulated by NR0B2. Activated, but not phosphorylated, by HIPK3 and ZIPK/DAPK3. This is Androgen receptor (Ar) from Rattus norvegicus (Rat).